A 408-amino-acid polypeptide reads, in one-letter code: Phosphoglycerate kinase (408 aa).

Substrate contacts are provided by residues 28-30 (DIN), R43, 66-69 (HQGR), R123, and R163. ATP is bound by residues E334 and 358–361 (GGHT).

It belongs to the phosphoglycerate kinase family. Monomer.

The protein resides in the cytoplasm. The catalysed reaction is (2R)-3-phosphoglycerate + ATP = (2R)-3-phospho-glyceroyl phosphate + ADP. Its pathway is carbohydrate degradation; glycolysis; pyruvate from D-glyceraldehyde 3-phosphate: step 2/5. In Pyrobaculum aerophilum (strain ATCC 51768 / DSM 7523 / JCM 9630 / CIP 104966 / NBRC 100827 / IM2), this protein is Phosphoglycerate kinase.